The sequence spans 388 residues: G2/mitotic-specific cyclin-B (388 aa).

This sequence belongs to the cyclin family. Cyclin AB subfamily. Interacts with the CDK1 protein kinase to form a serine/threonine kinase holoenzyme complex also known as maturation promoting factor (MPF). The cyclin subunit imparts substrate specificity to the complex.

Functionally, essential for the control of the cell cycle at the G2/M (mitosis) transition. The polypeptide is G2/mitotic-specific cyclin-B (Marthasterias glacialis (Spiny starfish)).